Consider the following 729-residue polypeptide: Pentatricopeptide repeat-containing protein At4g04370 (729 aa).

17 PPR repeats span residues 10-44, 45-79, 80-110, 111-145, 178-208, 209-243, 244-278, 279-309, 310-344, 345-379, 380-414, 415-445, 447-481, 482-512, 513-547, 548-583, and 584-618; these read STKY…KLLP, DTFT…GFSS, DFYI…MRER, DVVH…GIKP, DIAV…MEQR, DMVS…GLRP, DQQT…GFDV, DMHL…IPNK, DVVC…GSDL, SSEA…GYTL, DTPA…DLVS, WNAI…TVQQ, DSFT…FIRP, CSLV…ISWK, DVVS…GMEP, NHVI…GVEP, and NHEH…PSID. The interval 619 to 694 is type E motif; sequence VLGIILDACR…LPGWSKIEMN (76 aa). Residues 695-723 are type E(+) motif; that stretch reads GKTTTFFMNHTSHSDDTVSLLKLLSREMM.

Belongs to the PPR family. PCMP-E subfamily.

The chain is Pentatricopeptide repeat-containing protein At4g04370 (PCMP-E99) from Arabidopsis thaliana (Mouse-ear cress).